The following is a 153-amino-acid chain: Aspartate carbamoyltransferase regulatory chain (153 aa).

Zn(2+) contacts are provided by Cys-109, Cys-114, Cys-138, and Cys-141.

This sequence belongs to the PyrI family. As to quaternary structure, contains catalytic and regulatory chains. Zn(2+) is required as a cofactor.

In terms of biological role, involved in allosteric regulation of aspartate carbamoyltransferase. The polypeptide is Aspartate carbamoyltransferase regulatory chain (Shigella dysenteriae serotype 1 (strain Sd197)).